The chain runs to 515 residues: Bifunctional purine biosynthesis protein PurH (515 aa).

The region spanning 1 to 145 (MTKRALISVS…KNHASVTVVV (145 aa)) is the MGS-like domain.

Belongs to the PurH family.

The enzyme catalyses (6R)-10-formyltetrahydrofolate + 5-amino-1-(5-phospho-beta-D-ribosyl)imidazole-4-carboxamide = 5-formamido-1-(5-phospho-D-ribosyl)imidazole-4-carboxamide + (6S)-5,6,7,8-tetrahydrofolate. It catalyses the reaction IMP + H2O = 5-formamido-1-(5-phospho-D-ribosyl)imidazole-4-carboxamide. The protein operates within purine metabolism; IMP biosynthesis via de novo pathway; 5-formamido-1-(5-phospho-D-ribosyl)imidazole-4-carboxamide from 5-amino-1-(5-phospho-D-ribosyl)imidazole-4-carboxamide (10-formyl THF route): step 1/1. It functions in the pathway purine metabolism; IMP biosynthesis via de novo pathway; IMP from 5-formamido-1-(5-phospho-D-ribosyl)imidazole-4-carboxamide: step 1/1. This is Bifunctional purine biosynthesis protein PurH from Streptococcus pyogenes serotype M12 (strain MGAS2096).